An 80-amino-acid chain; its full sequence is Acyl carrier protein (80 aa).

One can recognise a Carrier domain in the interval 4-79 (EAILEKVRSI…DAVKYIEDKQ (76 aa)). An O-(pantetheine 4'-phosphoryl)serine modification is found at Ser-39.

The protein belongs to the acyl carrier protein (ACP) family. In terms of processing, 4'-phosphopantetheine is transferred from CoA to a specific serine of apo-ACP by AcpS. This modification is essential for activity because fatty acids are bound in thioester linkage to the sulfhydryl of the prosthetic group.

Its subcellular location is the cytoplasm. Its pathway is lipid metabolism; fatty acid biosynthesis. In terms of biological role, carrier of the growing fatty acid chain in fatty acid biosynthesis. The protein is Acyl carrier protein of Prochlorococcus marinus (strain MIT 9313).